We begin with the raw amino-acid sequence, 406 residues long: Vacuole membrane protein 1 (406 aa).

Over residues 1-20 the composition is skewed to basic and acidic residues; the sequence is MAENGKNCDQRRIAMSKDQH. Residues 1-37 are disordered; sequence MAENGKNCDQRRIAMSKDQHNGSLTDPSSVHEKKRRD. The residue at position 2 (Ala2) is an N-acetylalanine. Topologically, residues 2–77 are cytoplasmic; that stretch reads AENGKNCDQR…WTSKLWHRQS (76 aa). Residues 78–98 traverse the membrane as a helical segment; the sequence is IVVSFLLLLAALVATYYVEGA. The Extracellular segment spans residues 99–109; the sequence is HQQYVQRIEKQ. The helical transmembrane segment at 110–130 threads the bilayer; that stretch reads FLLYAYWIGLGILSSVGLGTG. Over 131–250 the chain is Cytoplasmic; sequence LHTFLLYLGP…ASRAKLAVQK (120 aa). A VTT domain region spans residues 173-316; it reads GAEGAISLWS…FVIVTFSKHI (144 aa). Residues 251 to 271 form a helical membrane-spanning segment; the sequence is LVQKVGFFGILACASIPNPLF. Topologically, residues 272–273 are extracellular; sequence DL. The chain crosses the membrane as a helical span at residues 274 to 294; it reads AGITCGHFLVPFWTFFGATLI. The Cytoplasmic portion of the chain corresponds to 295–305; that stretch reads GKAIIKMHIQK. A helical transmembrane segment spans residues 306-326; sequence IFVIVTFSKHIVEQMVTFIGA. The Extracellular portion of the chain corresponds to 327–363; sequence VPGIGPSLQKPFQEYLEAQRQKLHHRSEAGTPQGENW. A helical transmembrane segment spans residues 364 to 384; sequence LSWMFEKLVVAMVCYFVLSII. Topologically, residues 385–406 are cytoplasmic; that stretch reads NSMAQNYAKRIQQRLNSEEKTK.

It belongs to the VMP1 family. In terms of assembly, interacts with BECN1. Interacts with TJP1. Interacts with TP53INP2. Interacts with TMEM41B. Interacts with ATP2A2, PLN and SLN; competes with PLN and SLN to prevent them from forming an inhibitory complex with ATP2A2. Interacts with ATG2A.

It is found in the endoplasmic reticulum-Golgi intermediate compartment membrane. It localises to the cell membrane. The protein resides in the vacuole membrane. Its subcellular location is the endoplasmic reticulum membrane. The catalysed reaction is a 1,2-diacyl-sn-glycero-3-phospho-L-serine(in) = a 1,2-diacyl-sn-glycero-3-phospho-L-serine(out). The enzyme catalyses cholesterol(in) = cholesterol(out). It catalyses the reaction a 1,2-diacyl-sn-glycero-3-phosphocholine(in) = a 1,2-diacyl-sn-glycero-3-phosphocholine(out). It carries out the reaction a 1,2-diacyl-sn-glycero-3-phosphoethanolamine(in) = a 1,2-diacyl-sn-glycero-3-phosphoethanolamine(out). Phospholipid scramblase involved in lipid homeostasis and membrane dynamics processes. Has phospholipid scramblase activity toward cholesterol and phosphatidylserine, as well as phosphatidylethanolamine and phosphatidylcholine. Required for autophagosome formation: participates in early stages of autophagosome biogenesis at the endoplasmic reticulum (ER) membrane by reequilibrating the leaflets of the ER as lipids are extracted by ATG2 (ATG2A or ATG2B) to mediate autophagosome assembly. Regulates ATP2A2 activity to control ER-isolation membrane contacts for autophagosome formation. In addition to autophagy, involved in other processes in which phospholipid scramblase activity is required. Modulates ER contacts with lipid droplets, mitochondria and endosomes. Plays an essential role in formation of cell junctions. Upon stress such as bacterial and viral infection, promotes formation of cytoplasmic vacuoles followed by cell death. Involved in the cytoplasmic vacuolization of acinar cells during the early stage of acute pancreatitis. This is Vacuole membrane protein 1 from Mus musculus (Mouse).